The chain runs to 417 residues: Snake venom metalloproteinase acutolysin-C (417 aa).

The N-terminal stretch at 1 to 20 (MIQVLLVTICLAALPYQGSS) is a signal peptide. The propeptide at 21-189 (IMLESGKVND…KRPSRLNLTP (169 aa)) is activation peptide. One can recognise a Peptidase M12B domain in the interval 197-392 (TSVNLQLIVD…KKPKCIHKKS (196 aa)). Disulfide bonds link cysteine 308-cysteine 387, cysteine 349-cysteine 371, and cysteine 351-cysteine 354. Histidine 333 contacts Zn(2+). Glutamate 334 is an active-site residue. Zn(2+) contacts are provided by histidine 337 and histidine 343. Residues 393–417 (LKTDTVSTSVSGNEPLDDNVDGFHA) constitute a propeptide that is removed on maturation. The tract at residues 398 to 417 (VSTSVSGNEPLDDNVDGFHA) is disordered. Acidic residues predominate over residues 407–417 (PLDDNVDGFHA).

It belongs to the venom metalloproteinase (M12B) family. P-I subfamily. Monomer. Requires Zn(2+) as cofactor. In terms of tissue distribution, expressed by the venom gland.

It localises to the secreted. In terms of biological role, this protein is an alkaline zinc metalloprotease from snake venom that possesses weak hemorrhagic activity. The protein is Snake venom metalloproteinase acutolysin-C of Deinagkistrodon acutus (Hundred-pace snake).